The sequence spans 171 residues: ATP synthase subunit b (171 aa).

The chain crosses the membrane as a helical span at residues 14–34 (LGDMLFIGISFIVLMALISVV). Basic and acidic residues predominate over residues 56 to 97 (SAQKSRQEASDLADQRRDALSHSRAEASEIVADAKKSGEKQR). The disordered stretch occupies residues 56–104 (SAQKSRQEASDLADQRRDALSHSRAEASEIVADAKKSGEKQRSSIVADA).

This sequence belongs to the ATPase B chain family. In terms of assembly, F-type ATPases have 2 components, F(1) - the catalytic core - and F(0) - the membrane proton channel. F(1) has five subunits: alpha(3), beta(3), gamma(1), delta(1), epsilon(1). F(0) has three main subunits: a(1), b(2) and c(10-14). The alpha and beta chains form an alternating ring which encloses part of the gamma chain. F(1) is attached to F(0) by a central stalk formed by the gamma and epsilon chains, while a peripheral stalk is formed by the delta and b chains.

It is found in the cell membrane. In terms of biological role, f(1)F(0) ATP synthase produces ATP from ADP in the presence of a proton or sodium gradient. F-type ATPases consist of two structural domains, F(1) containing the extramembraneous catalytic core and F(0) containing the membrane proton channel, linked together by a central stalk and a peripheral stalk. During catalysis, ATP synthesis in the catalytic domain of F(1) is coupled via a rotary mechanism of the central stalk subunits to proton translocation. Component of the F(0) channel, it forms part of the peripheral stalk, linking F(1) to F(0). The protein is ATP synthase subunit b of Lactiplantibacillus plantarum (strain ATCC BAA-793 / NCIMB 8826 / WCFS1) (Lactobacillus plantarum).